We begin with the raw amino-acid sequence, 662 residues long: Methyl-accepting chemotaxis protein TlpA (662 aa).

Over 1–16 (MKKTLTTIRRSSIARR) the chain is Cytoplasmic. A helical membrane pass occupies residues 17-37 (LIISFLLILIVPITALSVSAY). Residues 38 to 281 (QSAVASLDVQ…IHDAASRVLI (244 aa)) are Extracellular-facing. One can recognise a Cache domain in the interval 152–228 (VTEPYESISS…KAGTELKGDW (77 aa)). The chain crosses the membrane as a helical span at residues 282–302 (MASIVLAIAIGAGMTAIYFVI). The HAMP domain maps to 303-355 (RSITKPLRRIVASAEKISEGDLTETIEINSKDELGVLSESFNHMAHSLRSLIH). The Cytoplasmic segment spans residues 303 to 662 (RSITKPLRRI…DLTKQFKVDK (360 aa)). A glutamate methyl ester (Glu) mark is found at E370, E594, E629, and E636. One can recognise a Methyl-accepting transducer domain in the interval 374–610 (SADQTSRATE…EISAASNDIT (237 aa)).

The protein belongs to the methyl-accepting chemotaxis (MCP) protein family. Interacts with YabA.

The protein resides in the cell membrane. In terms of biological role, chemotactic-signal transducers respond to changes in the concentration of attractants and repellents in the environment, transduce a signal from the outside to the inside of the cell, and facilitate sensory adaptation through the variation of the level of methylation. All amino acids serve as attractants in B.subtilis, they appear to cause an increase in the turnover methyl groups, leading to methylation of an unidentified acceptor, while repellents have been shown to cause a decrease in methyl group turnover. The methyl groups are added by a methyltransferase and removed by a methylesterase. The polypeptide is Methyl-accepting chemotaxis protein TlpA (Bacillus subtilis (strain 168)).